The sequence spans 787 residues: Protein translocase subunit SecA 2 (787 aa).

Residues Gln-86, 104-108 (GEGKT), and Asp-493 each bind ATP.

Belongs to the SecA family. Monomer and homodimer. Part of the essential Sec protein translocation apparatus which comprises SecA, SecYEG and auxiliary proteins SecDF. Other proteins may also be involved.

The protein localises to the cell membrane. It localises to the cytoplasm. The catalysed reaction is ATP + H2O + cellular proteinSide 1 = ADP + phosphate + cellular proteinSide 2.. In terms of biological role, part of the Sec protein translocase complex. Interacts with the SecYEG preprotein conducting channel. Has a central role in coupling the hydrolysis of ATP to the transfer of proteins into and across the cell membrane, serving as an ATP-driven molecular motor driving the stepwise translocation of polypeptide chains across the membrane. The protein is Protein translocase subunit SecA 2 of Bacillus thuringiensis subsp. konkukian (strain 97-27).